A 67-amino-acid chain; its full sequence is Bowman-Birk type proteinase inhibitor A4 (67 aa).

4 disulfide bridges follow: C10–C29, C16–C27, C36–C43, and C40–C57.

This sequence belongs to the Bowman-Birk serine protease inhibitor family. In terms of tissue distribution, expressed in bulb (at protein level).

Functionally, serine protease inhibitor. Inhibits trypsin (Ki=12nM) and weakly inhibits chymotrypsin with (Ki=460nm). Does not inhibit bacterial subtilisin. The chain is Bowman-Birk type proteinase inhibitor A4 from Hyacinthus orientalis (Common hyacinth).